The following is a 428-amino-acid chain: Tyrosine--tRNA ligase (428 aa).

Y41 is a binding site for L-tyrosine. The 'HIGH' region signature appears at P46–H55. N6-acetyllysine is present on K148. L-tyrosine contacts are provided by Y179 and Q183. The 'KMSKS' region motif lies at K239–T243. K242 provides a ligand contact to ATP. The region spanning A361–G418 is the S4 RNA-binding domain.

Belongs to the class-I aminoacyl-tRNA synthetase family. TyrS type 1 subfamily. As to quaternary structure, homodimer.

It localises to the cytoplasm. The catalysed reaction is tRNA(Tyr) + L-tyrosine + ATP = L-tyrosyl-tRNA(Tyr) + AMP + diphosphate + H(+). In terms of biological role, catalyzes the attachment of tyrosine to tRNA(Tyr) in a two-step reaction: tyrosine is first activated by ATP to form Tyr-AMP and then transferred to the acceptor end of tRNA(Tyr). The sequence is that of Tyrosine--tRNA ligase from Escherichia coli O1:K1 / APEC.